Here is a 253-residue protein sequence, read N- to C-terminus: Sulfate transporter CysZ (253 aa).

4 helical membrane passes run 31-51 (FVIL…WWLF), 72-92 (LSYL…GYFF), 151-171 (IVLL…PVLW), and 222-242 (IPVL…AMWV).

The protein belongs to the CysZ family.

It is found in the cell inner membrane. High affinity, high specificity proton-dependent sulfate transporter, which mediates sulfate uptake. Provides the sulfur source for the cysteine synthesis pathway. This Salmonella paratyphi A (strain AKU_12601) protein is Sulfate transporter CysZ.